Here is a 128-residue protein sequence, read N- to C-terminus: uncharacterized protein (128 aa).

This is an uncharacterized protein from Mycoplasma genitalium (strain ATCC 33530 / DSM 19775 / NCTC 10195 / G37) (Mycoplasmoides genitalium).